The sequence spans 218 residues: 3-phospho-D-glycerate guanylyltransferase (218 aa).

This sequence belongs to the CofC family.

The catalysed reaction is (2R)-3-phosphoglycerate + GTP + H(+) = 3-[(R)-glyceryl]-diphospho-5'-guanosine + diphosphate. It participates in cofactor biosynthesis; coenzyme F420 biosynthesis. In terms of biological role, guanylyltransferase that catalyzes the activation of (2R)-3-phosphoglycerate (3PG) as 3-[(R)-glyceryl]-diphospho-5'-guanosine, via the condensation of 3PG with GTP. It is involved in the biosynthesis of a derivative of the hydride carrier cofactor coenzyme F420, 3PG-F420. The protein is 3-phospho-D-glycerate guanylyltransferase of Phenylobacterium zucineum (strain HLK1).